Consider the following 335-residue polypeptide: tRNA N6-adenosine threonylcarbamoyltransferase (335 aa).

His109, His113, and Tyr130 together coordinate a divalent metal cation. Substrate-binding positions include 130-134 (YVSGG), Asp162, Gly177, Glu181, and Asn266. Asp294 contributes to the a divalent metal cation binding site.

It belongs to the KAE1 / TsaD family. Component of the EKC/KEOPS complex composed of at least GON7, TP53RK, TPRKB, OSGEP and LAGE3; the whole complex dimerizes. It depends on a divalent metal cation as a cofactor.

The protein localises to the cytoplasm. It localises to the nucleus. The enzyme catalyses L-threonylcarbamoyladenylate + adenosine(37) in tRNA = N(6)-L-threonylcarbamoyladenosine(37) in tRNA + AMP + H(+). Its function is as follows. Component of the EKC/KEOPS complex that is required for the formation of a threonylcarbamoyl group on adenosine at position 37 (t(6)A37) in tRNAs that read codons beginning with adenine. The complex is probably involved in the transfer of the threonylcarbamoyl moiety of threonylcarbamoyl-AMP (TC-AMP) to the N6 group of A37. OSGEP likely plays a direct catalytic role in this reaction, but requires other protein(s) of the complex to fulfill this activity. This is tRNA N6-adenosine threonylcarbamoyltransferase (Osgep) from Rattus norvegicus (Rat).